The chain runs to 1026 residues: Multidrug resistance protein MdtC (1026 aa).

The next 11 membrane-spanning stretches (helical) occupy residues Ile-15–Ala-35, Glu-333–Leu-353, Leu-360–Cys-380, Leu-387–Leu-407, Val-431–Leu-451, Phe-463–Pro-483, Leu-528–Pro-548, Leu-853–Ser-873, Leu-897–Val-917, Pro-953–Gly-973, and Ile-984–Val-1004.

This sequence belongs to the resistance-nodulation-cell division (RND) (TC 2.A.6) family. MdtC subfamily. Part of a tripartite efflux system composed of MdtA, MdtB and MdtC. MdtC forms a heteromultimer with MdtB.

The protein resides in the cell inner membrane. The protein is Multidrug resistance protein MdtC of Salmonella newport (strain SL254).